The primary structure comprises 450 residues: 3-phosphoshikimate 1-carboxyvinyltransferase (450 aa).

The tract at residues 1-25 is disordered; it reads MSAHGDPKPMTARKGGALTGTAEVP. 3 residues coordinate 3-phosphoshikimate: lysine 28, serine 29, and arginine 33. Lysine 28 is a phosphoenolpyruvate binding site. 2 residues coordinate phosphoenolpyruvate: glycine 101 and arginine 129. 3-phosphoshikimate is bound by residues serine 174, glutamine 176, aspartate 327, and lysine 354. Glutamine 176 serves as a coordination point for phosphoenolpyruvate. Aspartate 327 functions as the Proton acceptor in the catalytic mechanism. The phosphoenolpyruvate site is built by arginine 358 and arginine 403.

It belongs to the EPSP synthase family. Monomer.

It localises to the cytoplasm. The catalysed reaction is 3-phosphoshikimate + phosphoenolpyruvate = 5-O-(1-carboxyvinyl)-3-phosphoshikimate + phosphate. It participates in metabolic intermediate biosynthesis; chorismate biosynthesis; chorismate from D-erythrose 4-phosphate and phosphoenolpyruvate: step 6/7. In terms of biological role, catalyzes the transfer of the enolpyruvyl moiety of phosphoenolpyruvate (PEP) to the 5-hydroxyl of shikimate-3-phosphate (S3P) to produce enolpyruvyl shikimate-3-phosphate and inorganic phosphate. This Jannaschia sp. (strain CCS1) protein is 3-phosphoshikimate 1-carboxyvinyltransferase.